Here is a 123-residue protein sequence, read N- to C-terminus: Amoebiasin-2 (123 aa).

The N-terminal stretch at 1–16 (MKQFIFFALLCTSTYA) is a signal peptide. Positions 45–50 (NPSTGY) match the BC loop motif. Residues 71-81 (EPHPSGMVGFP) carry the DE loop motif. The short motif at 105 to 114 (PWEKGKEPLR) is the FG loop element.

It belongs to the protease inhibitor I42 family. As to quaternary structure, monomer. May form homodimer. Interacts with cysteine protease CP2. Interacts with cysteine protease CP5.

Its subcellular location is the cytoplasmic vesicle. The protein resides in the lysosome. It is found in the phagosome. Cysteine protease inhibitor. Inhibits cysteine proteases CP1, CP2 and to a lesser extent CP5. In Entamoeba histolytica (strain ATCC 30459 / HM-1:IMSS / ABRM), this protein is Amoebiasin-2.